We begin with the raw amino-acid sequence, 377 residues long: Apelin receptor (377 aa).

Residues 1 to 28 are Extracellular-facing; it reads MEDDGYNYYGADNQSECDYADWKPSGAL. N-linked (GlcNAc...) asparagine glycosylation occurs at Asn-13. Cystine bridges form between Cys-17-Cys-279 and Cys-100-Cys-179. The helical transmembrane segment at 29–52 threads the bilayer; the sequence is IPAIYMLVFLLGTTGNGLVLWTVF. Over 53-62 the chain is Cytoplasmic; that stretch reads RTSREKRRSA. A helical transmembrane segment spans residues 63–84; the sequence is DIFIASLAVADLTFVVTLPLWA. The Extracellular portion of the chain corresponds to 85–97; the sequence is TYTYREFDWPFGT. A helical membrane pass occupies residues 98 to 123; the sequence is FSCKLSSYLIFVNMYASVFCLTGLSF. At 124-144 the chain is on the cytoplasmic side; that stretch reads DRYLAIVRPVANARLRLRVSG. Residues 145–162 traverse the membrane as a helical segment; that stretch reads AVATAVLWVLAALLAVPV. The Extracellular portion of the chain corresponds to 163-196; that stretch reads MVFRSTDASENGTKIQCYMDYSMVATSNSEWAWE. Asn-173 carries an N-linked (GlcNAc...) asparagine glycan. The helical transmembrane segment at 197–221 threads the bilayer; the sequence is VGLGVSSTAVGFVVPFTIMLTCYFF. Topologically, residues 222 to 244 are cytoplasmic; that stretch reads IAQTIAGHFRKERIEGLRKRRRL. The chain crosses the membrane as a helical span at residues 245-268; sequence LSIIVVLVVTFALCWMPYHLVKTL. Residues 269 to 287 are Extracellular-facing; it reads YMLGSLLHWPCDFDIFLMN. The helical transmembrane segment at 288–310 threads the bilayer; sequence VFPYCTCISYVNSCLNPFLYAFF. Topologically, residues 311 to 377 are cytoplasmic; the sequence is DPRFRQACTS…IPYSQETLVD (67 aa). Residues 334 to 377 are disordered; that stretch reads HSSSAEKSASYSSGHSQGPGPNMGKGGEQMHEKSIPYSQETLVD. The span at 335–349 shows a compositional bias: low complexity; it reads SSSAEKSASYSSGHS.

The protein belongs to the G-protein coupled receptor 1 family. As to quaternary structure, homodimer; dimerization inhibits APLNR-mediated G protein and beta-arrestin signaling pathways compared to monomeric APLNR. As to expression, expressed in coronary endothelial cells (at protein level). Expressed in the embryo, allantoic and endothelial precursor cells of the yolk sac at 8 days post-coitum (dpc). Expressed in the secondary heart field and somite at 8.25 dpc. Expressed in fetal allantoic endothelial cells at 9 dpc. Expressed in the allantoid and the invading fetal vasculature of the placenta at 9.5 dpc. Expressed in endothelial cells adjacent to syncytiotrophoblast cells at 10.5 dpc. Expressed weakly in the embryonic heart at 11.5 dpc. Expressed in the adult heart. Expressed in endothelial cells and cardiomyocytes and weakly expressed in fibroblasts.

It is found in the cell membrane. G protein-coupled receptor for peptide hormones apelin (APLN) and apelin receptor early endogenous ligand (APELA), that plays a role in the regulation of normal cardiovascular function and fluid homeostasis. When acting as apelin receptor, activates both G(i) protein pathway that inhibits adenylate cyclase activity, and the beta-arrestin pathway leading to internalization of the receptor. APLNR/APJ receptor is also activated by mechanical strech in a G-protein-independent fashion to induce beta-arrestin signaling leading to cardiac hypertrophy. However, the presence of apelin ligand blunts cardiac hypertrophic induction from APLNR/APJ on response to pathological stimuli. Plays a key role in early development such as gastrulation, blood vessels formation and heart morphogenesis by acting as a receptor for APELA hormone. May promote angioblast migration toward the embryonic midline, i.e. the position of the future vessel formation, during vasculogenesis. Promotes sinus venosus (SV)-derived endothelial cells migration into the developing heart to promote coronary blood vessel development. Also plays a role in various processes in adults such as regulation of blood vessel formation, blood pressure and heart contractility and protection from cardiac hypertrophy and heart failure. The chain is Apelin receptor from Mus musculus (Mouse).